The primary structure comprises 445 residues: MAYFPNIGTIPYEGPESRNPLAFKFYNPDEKVGGKTMEEHLRFSVAYWHTFTGDGSDPFGVGNMIRPWNTYSGMDLAKARVEAAFELFEKLNVPFFCFHDVDIAPEGETLSETYKNLDEIVDMIEEYMKTSKTKLLWNTANLFSHPRFVHGAATSCNADVFAYAAAKVKKGLEIAKRLGAENYVFWGGREGYETLLNTDMKLELDNLARFLHMAVDYAKEIGFDGQFLIEPKPKEPTKHQYDFDVATALAFLQTYGLKDHFKFNIEANHATLAGHTFEHELRVARIHGMLGSVDANQGDTLLGWDTDEFPTDLYTTTLAMYEILQNGGLGRGGLNFDAKVRRGSFEPEDLFYAHIAGMDSFAIGLKVAHRLLEDRVFEQFIEERYKSYTEGIGREIVEGTADFKKLEEYALQLGDIRNTSGRLERLKTLLNQYLLEVSAPSGSRS.

Catalysis depends on residues histidine 99 and aspartate 102. Mg(2+) contacts are provided by glutamate 230, glutamate 266, histidine 269, aspartate 294, aspartate 305, aspartate 307, and aspartate 337.

Belongs to the xylose isomerase family. In terms of assembly, homotetramer. Mg(2+) serves as cofactor.

The protein resides in the cytoplasm. The enzyme catalyses alpha-D-xylose = alpha-D-xylulofuranose. This Geobacillus kaustophilus (strain HTA426) protein is Xylose isomerase.